The sequence spans 172 residues: Putative phosphoesterase BCE_1348 (172 aa).

The active-site Proton donor is the His-34. 2 short sequence motifs (HXTX) span residues 34-37 (HITL) and 115-118 (HLTI). His-115 acts as the Proton acceptor in catalysis.

This sequence belongs to the 2H phosphoesterase superfamily. YjcG family.

This chain is Putative phosphoesterase BCE_1348, found in Bacillus cereus (strain ATCC 10987 / NRS 248).